The following is a 411-amino-acid chain: 1-deoxy-D-xylulose 5-phosphate reductoisomerase (411 aa).

NADPH-binding residues include T11, G12, S13, I14, and N124. K125 is a 1-deoxy-D-xylulose 5-phosphate binding site. E126 contacts NADPH. D150 is a Mn(2+) binding site. Residues S151, E152, S186, and H209 each coordinate 1-deoxy-D-xylulose 5-phosphate. E152 serves as a coordination point for Mn(2+). G215 contributes to the NADPH binding site. Residues S222, N227, K228, and E231 each coordinate 1-deoxy-D-xylulose 5-phosphate. E231 is a Mn(2+) binding site.

The protein belongs to the DXR family. It depends on Mg(2+) as a cofactor. Mn(2+) serves as cofactor.

The enzyme catalyses 2-C-methyl-D-erythritol 4-phosphate + NADP(+) = 1-deoxy-D-xylulose 5-phosphate + NADPH + H(+). It participates in isoprenoid biosynthesis; isopentenyl diphosphate biosynthesis via DXP pathway; isopentenyl diphosphate from 1-deoxy-D-xylulose 5-phosphate: step 1/6. Its function is as follows. Catalyzes the NADPH-dependent rearrangement and reduction of 1-deoxy-D-xylulose-5-phosphate (DXP) to 2-C-methyl-D-erythritol 4-phosphate (MEP). This is 1-deoxy-D-xylulose 5-phosphate reductoisomerase from Psychrobacter sp. (strain PRwf-1).